A 106-amino-acid polypeptide reads, in one-letter code: uncharacterized protein (106 aa).

This is an uncharacterized protein from Escherichia coli (strain K12).